Here is a 166-residue protein sequence, read N- to C-terminus: Large ribosomal subunit protein uL10 (166 aa).

The protein belongs to the universal ribosomal protein uL10 family. In terms of assembly, part of the ribosomal stalk of the 50S ribosomal subunit. The N-terminus interacts with L11 and the large rRNA to form the base of the stalk. The C-terminus forms an elongated spine to which L12 dimers bind in a sequential fashion forming a multimeric L10(L12)X complex.

In terms of biological role, forms part of the ribosomal stalk, playing a central role in the interaction of the ribosome with GTP-bound translation factors. This Azotobacter vinelandii (strain DJ / ATCC BAA-1303) protein is Large ribosomal subunit protein uL10.